The chain runs to 280 residues: MMPLGLFPLPRAAAVLLISLLTLPAQAAERVISLSPSTTELAYAAGLGDKLVAVSAYSDYPESAKKLEHVASWQGINVERILALKPDLILAWRGGNPQRPLDQLAALGIPIFYSDPTHIDQIASDLDKLAQYSPHPEQAHQAAEQFRQHVNTLRDRYARSQPKRTFLQFGTQPLFTSSGHTLQSEVVSLCGGENIFADSRVPWPQVSREQVMTRKPQVIVVSGTQSQVDNVSAFWLPQLVVPVIALNEDWFNRASPRILLAAQQLCQQMASIPTPVAESH.

The N-terminal stretch at 1–27 (MMPLGLFPLPRAAAVLLISLLTLPAQA) is a signal peptide. One can recognise a Fe/B12 periplasmic-binding domain in the interval 30-277 (RVISLSPSTT…QMASIPTPVA (248 aa)). Residue Tyr57 coordinates cyanocob(III)alamin. An intrachain disulfide couples Cys190 to Cys266.

It belongs to the BtuF family. In terms of assembly, the complex is composed of two ATP-binding proteins (BtuD), two transmembrane proteins (BtuC) and a solute-binding protein (BtuF).

The protein localises to the periplasm. Functionally, part of the ABC transporter complex BtuCDF involved in vitamin B12 import. Binds vitamin B12 and delivers it to the periplasmic surface of BtuC. In Yersinia pestis bv. Antiqua (strain Antiqua), this protein is Vitamin B12-binding protein.